The chain runs to 56 residues: Large ribosomal subunit protein bL33B (56 aa).

Belongs to the bacterial ribosomal protein bL33 family.

This chain is Large ribosomal subunit protein bL33B, found in Cutibacterium acnes (strain DSM 16379 / KPA171202) (Propionibacterium acnes).